Here is a 454-residue protein sequence, read N- to C-terminus: Protein pid-2 (454 aa).

The segment at 31-61 (VQNNQKEHPPVQEIKTVSSKSKEHRVSSSRK) is disordered. A compositionally biased stretch (basic and acidic residues) spans 50-61 (KSKEHRVSSSRK).

As to quaternary structure, may interact with pid-4, pid-5, app-1 and prmt-5. In terms of tissue distribution, expressed throughout the mitotic and meiotic regions of the germline and in oocytes.

Its subcellular location is the cytoplasm. It is found in the perinuclear region. It localises to the cytoplasmic granule. Functionally, involved in gene silencing mediated by a class of 21 nucleotide PIWI-interacting RNAs (piRNAs) that possess a uracil residue at the 5'-end (also called 21U-RNAs) and that guide the Piwi protein prg-1 to its DNA targets for silencing. Not required for the biogenesis of 21U-RNAs. May also be involved in gene silencing mediated by 22G-siRNAs (a class of 22 nucleotide endogenous small interfering RNAs (siRNAs) that possess a triphosphorylated guanine residue at the 5'-end) and 26G-siRNAs (a class of 26 nucleotide siRNAs that possess a guanine residue at the 5'-end). Required for the biogenesis of secondary and tertiary 22G-siRNAs from many loci. Specifically, promotes the production of 22G-siRNAs from the 5' end of target mRNAs. May play a role in the production of 26G-siRNAs. Plays a role in small RNA-directed transgenerational epigenetic inheritance (also called RNAe) over several generations and germline immortality. Together with the argonaut protein hrde-1, promotes the silencing of the DNA transposable element Tc1. Required for the formation of liquid-like condensates in the cytoplasm called Z granules, playing a role in maintaining their assembly, viscosity and morphology in adult germ cells, and localization in early embryos. The protein is Protein pid-2 of Caenorhabditis elegans.